Reading from the N-terminus, the 489-residue chain is Probable cytosol aminopeptidase (489 aa).

Residues K255 and D260 each contribute to the Mn(2+) site. The active site involves K267. Mn(2+) contacts are provided by D279, D339, and E341. Residue R343 is part of the active site.

This sequence belongs to the peptidase M17 family. The cofactor is Mn(2+).

It is found in the cytoplasm. It catalyses the reaction Release of an N-terminal amino acid, Xaa-|-Yaa-, in which Xaa is preferably Leu, but may be other amino acids including Pro although not Arg or Lys, and Yaa may be Pro. Amino acid amides and methyl esters are also readily hydrolyzed, but rates on arylamides are exceedingly low.. The enzyme catalyses Release of an N-terminal amino acid, preferentially leucine, but not glutamic or aspartic acids.. Functionally, presumably involved in the processing and regular turnover of intracellular proteins. Catalyzes the removal of unsubstituted N-terminal amino acids from various peptides. In Synechococcus sp. (strain CC9605), this protein is Probable cytosol aminopeptidase.